The following is a 195-amino-acid chain: Thymidine kinase (195 aa).

ATP is bound by residues 9–16 and 87–90; these read STMNAGKS and DEAQ. The active-site Proton acceptor is the Glu88. Zn(2+)-binding residues include Cys145, Cys147, Cys182, and His185.

It belongs to the thymidine kinase family. As to quaternary structure, homotetramer.

It is found in the cytoplasm. It carries out the reaction thymidine + ATP = dTMP + ADP + H(+). This Mannheimia succiniciproducens (strain KCTC 0769BP / MBEL55E) protein is Thymidine kinase.